The following is a 315-amino-acid chain: Probable cell division protein WhiA (315 aa).

Positions 274-308 (SLKNLGELIPGGPISKSGINHRLRKLNEIAEKIRA) form a DNA-binding region, H-T-H motif.

Belongs to the WhiA family.

Its function is as follows. Involved in cell division and chromosome segregation. In Ligilactobacillus salivarius (strain UCC118) (Lactobacillus salivarius), this protein is Probable cell division protein WhiA.